Reading from the N-terminus, the 116-residue chain is Large ribosomal subunit protein bL17 (116 aa).

The protein belongs to the bacterial ribosomal protein bL17 family. In terms of assembly, part of the 50S ribosomal subunit. Contacts protein L32.

This chain is Large ribosomal subunit protein bL17, found in Synechocystis sp. (strain ATCC 27184 / PCC 6803 / Kazusa).